We begin with the raw amino-acid sequence, 855 residues long: Nuclear valosin-containing protein-like (855 aa).

Positions 1 to 219 (MKPRPGVFVD…SLLESDKKRK (219 aa)) are interaction with RPL5. Residues 49-52 (RRKR) carry the Nucleolar localization signal motif. Lysine 70 is subject to N6-acetyllysine. Residues 83–234 (LAKRARQDEE…KGNKRKTENL (152 aa)) form a disordered region. The Nuclear localization signal motif lies at 85-88 (KRAR). Acidic residues predominate over residues 90–110 (DEEDEYTESYSDDDSNMEDYP). Composition is skewed to polar residues over residues 113-123 (QSANPMNSSLL) and 131-157 (SESV…SKTG). Residue serine 133 is modified to Phosphoserine. The residue at position 137 (threonine 137) is a Phosphothreonine. Residue lysine 155 is modified to N6-acetyllysine. Residue serine 190 is modified to Phosphoserine. Residue lysine 207 forms a Glycyl lysine isopeptide (Lys-Gly) (interchain with G-Cter in SUMO2) linkage. Phosphoserine occurs at positions 210 and 214. Positions 217–228 (KRKGRAKGKGNK) are enriched in basic residues. Residues 217–231 (KRKGRAKGKGNKRKT) carry the Nuclear localization signal motif. Residues 266-473 (VGGNDATLKE…LTPGFVGADL (208 aa)) are interaction with WDR74. 304-311 (GPPGCGKT) provides a ligand contact to ATP. Residues 496–523 (QKKKPEIEGLPSEGDQEERLGAEPTSET) form a disordered region. 621–628 (GPPGCGKT) is an ATP binding site.

It belongs to the AAA ATPase family. As to quaternary structure, interacts with NCL/nucleolin. Isoform 1 and isoform 2 interact with TERT and isoform 1 exhibits a higher binding affinity for TERT compared to isoform 2. Isoform 1 interacts with MTREX in an ATP-dependent manner; the interaction is required to associate NVL with nuclear RNA exosome. Isoform 1 interacts with RPL5 in an ATP-dependent manner. Interacts with WDR74 (through WDR repeats); the interaction is independent of RNA or pre-60S ribosome particles.

The protein resides in the nucleus. The protein localises to the nucleolus. It localises to the nucleoplasm. Participates in the assembly of the telomerase holoenzyme and effecting of telomerase activity via its interaction with TERT. Involved in both early and late stages of the pre-rRNA processing pathways. Spatiotemporally regulates 60S ribosomal subunit biogenesis in the nucleolus. Catalyzes the release of specific assembly factors, such as WDR74, from pre-60S ribosomal particles through the ATPase activity. The chain is Nuclear valosin-containing protein-like from Mus musculus (Mouse).